The primary structure comprises 370 residues: Mitochondrial carrier protein SCaMC-3L (370 aa).

Solcar repeat units follow at residues 90–176, 184–269, and 280–367; these read EALW…CKNY, PPFQ…LQCF, and PSGL…MKKT. 6 consecutive transmembrane segments (helical) span residues 96 to 113, 151 to 170, 194 to 207, 245 to 263, 282 to 306, and 342 to 361; these read LLSG…TAPL, GNGI…FSVF, SLAV…INPM, YLPN…LAVY, GLVS…LTLV, and GMTP…YVVY.

It belongs to the mitochondrial carrier (TC 2.A.29) family.

The protein localises to the mitochondrion inner membrane. The enzyme catalyses Mg(2+)(out) + phosphate(in) + ATP(out) = Mg(2+)(in) + phosphate(out) + ATP(in). The catalysed reaction is ADP(out) + phosphate(in) + H(+)(out) = ADP(in) + phosphate(out) + H(+)(in). Calcium-independent ATP-Mg/Pi exchanger that catalyzes the electroneutral exchange of Mg-ATP or free ADP against an hydrogenphosphate and participates in the net transport of adenine nucleotides across the mitochondria inner membrane. This chain is Mitochondrial carrier protein SCaMC-3L, found in Homo sapiens (Human).